A 257-amino-acid polypeptide reads, in one-letter code: Putative phosphatase YkrA (257 aa).

Residue D9 is the Nucleophile of the active site. D9 contributes to the Mg(2+) binding site. I10 is a phosphate binding site. A Mg(2+)-binding site is contributed by D11. Residues 43 to 44 and K183 contribute to the phosphate site; that span reads SG. Position 206 (D206) interacts with Mg(2+). N209 contacts phosphate.

The protein belongs to the HAD-like hydrolase superfamily. Cof family. The cofactor is Mg(2+).

The protein is Putative phosphatase YkrA (ykrA) of Bacillus subtilis (strain 168).